A 461-amino-acid chain; its full sequence is MNESIFIKEFIKILIKCKLGNEEDWFIEIIDKVWIWADKFQIKIISRVNENKELIEPINKIWNDSLKQISSEINLNKICILNLQKEISFKYLLEFENIKEFILSLFLNNLLLTEYQLLICLNSFFNNNSNLSLNVINKIREISSKNSFNNLLKDFNLKFQESIFGVNFKTNINDNKNNNELFLFPSIHINENLESRAIAQLLLNNFLKIQTNKEKEEIDPETINVISNLYNNDTTVFLWILLILSFNINNNNNNNNNNNNNNNNNNNNNNNNNNYNNLIGEMLTLIEKSKLVKKVKFFLCSDNYLLMSVTKLNFNFFQLYQDALFSLIEYYLFNENSKEINIDSDYLNYLNSSLLSLLQLTSPILINQPSQPTSPPQNEINNNNNNNNNNNNNNNNNNNNNNNNNNNNNNNNNSITSIRHLVLNSINQRIFATKTLKTNEISKGNVLKMLIDLKNSNSIKK.

Disordered regions lie at residues 254-273 (NNNN…NNNN) and 368-414 (QPSQ…NNNS). Positions 381–413 (NNNNNNNNNNNNNNNNNNNNNNNNNNNNNNNNN) are enriched in low complexity.

This is an uncharacterized protein from Dictyostelium discoideum (Social amoeba).